A 348-amino-acid polypeptide reads, in one-letter code: GMP reductase (348 aa).

Position 108–131 (108–131 (ADFQKTKDVMALSDELIFICIDIA)) interacts with NADP(+). The K(+) site is built by glycine 181 and glycine 183. Cysteine 186 functions as the Thioimidate intermediate in the catalytic mechanism. 216-239 (IIGDGGCACAGDVAKAFGGGADFV) provides a ligand contact to NADP(+).

This sequence belongs to the IMPDH/GMPR family. GuaC type 1 subfamily. As to quaternary structure, homotetramer.

The enzyme catalyses IMP + NH4(+) + NADP(+) = GMP + NADPH + 2 H(+). Functionally, catalyzes the irreversible NADPH-dependent deamination of GMP to IMP. It functions in the conversion of nucleobase, nucleoside and nucleotide derivatives of G to A nucleotides, and in maintaining the intracellular balance of A and G nucleotides. The chain is GMP reductase from Vibrio vulnificus (strain CMCP6).